The chain runs to 353 residues: Chorismate synthase (353 aa).

Residues Arg-48 and Arg-54 each coordinate NADP(+). Residues 125-127, 238-239, Gly-278, 293-297, and Arg-319 each bind FMN; these read RSS, NA, and KPTSS.

It belongs to the chorismate synthase family. Homotetramer. FMNH2 serves as cofactor.

The enzyme catalyses 5-O-(1-carboxyvinyl)-3-phosphoshikimate = chorismate + phosphate. It participates in metabolic intermediate biosynthesis; chorismate biosynthesis; chorismate from D-erythrose 4-phosphate and phosphoenolpyruvate: step 7/7. Its function is as follows. Catalyzes the anti-1,4-elimination of the C-3 phosphate and the C-6 proR hydrogen from 5-enolpyruvylshikimate-3-phosphate (EPSP) to yield chorismate, which is the branch point compound that serves as the starting substrate for the three terminal pathways of aromatic amino acid biosynthesis. This reaction introduces a second double bond into the aromatic ring system. This chain is Chorismate synthase, found in Buchnera aphidicola subsp. Schizaphis graminum (strain Sg).